We begin with the raw amino-acid sequence, 388 residues long: Phosphopentomutase (388 aa).

Mn(2+) is bound by residues aspartate 10, aspartate 282, histidine 287, aspartate 323, histidine 324, and histidine 335.

This sequence belongs to the phosphopentomutase family. Requires Mn(2+) as cofactor.

It is found in the cytoplasm. The enzyme catalyses 2-deoxy-alpha-D-ribose 1-phosphate = 2-deoxy-D-ribose 5-phosphate. It carries out the reaction alpha-D-ribose 1-phosphate = D-ribose 5-phosphate. Its pathway is carbohydrate degradation; 2-deoxy-D-ribose 1-phosphate degradation; D-glyceraldehyde 3-phosphate and acetaldehyde from 2-deoxy-alpha-D-ribose 1-phosphate: step 1/2. Functionally, isomerase that catalyzes the conversion of deoxy-ribose 1-phosphate (dRib-1-P) and ribose 1-phosphate (Rib-1-P) to deoxy-ribose 5-phosphate (dRib-5-P) and ribose 5-phosphate (Rib-5-P), respectively. The chain is Phosphopentomutase from Carboxydothermus hydrogenoformans (strain ATCC BAA-161 / DSM 6008 / Z-2901).